A 146-amino-acid polypeptide reads, in one-letter code: Large ribosomal subunit protein eL28 (146 aa).

The interval 123–146 (VRAARKERSSKITFQRKAVRPKRH) is disordered.

Belongs to the eukaryotic ribosomal protein eL28 family.

This Trypanosoma cruzi protein is Large ribosomal subunit protein eL28.